The sequence spans 209 residues: Thymidylate kinase (209 aa).

Position 10–17 (10–17) interacts with ATP; that stretch reads GLDGAGKS.

This sequence belongs to the thymidylate kinase family.

The enzyme catalyses dTMP + ATP = dTDP + ADP. Its function is as follows. Phosphorylation of dTMP to form dTDP in both de novo and salvage pathways of dTTP synthesis. The sequence is that of Thymidylate kinase from Francisella tularensis subsp. tularensis (strain FSC 198).